Consider the following 65-residue polypeptide: MPKIKTNRAAAKRFRKTASGKYKCGHANRSHILTKKATKRKRNLRQTGHVRAEDAGRLDRMLPYL.

This sequence belongs to the bacterial ribosomal protein bL35 family.

The chain is Large ribosomal subunit protein bL35 from Stenotrophomonas maltophilia (strain R551-3).